Reading from the N-terminus, the 79-residue chain is Sulfur carrier protein TusA (79 aa).

Cys17 serves as the catalytic Cysteine persulfide intermediate.

The protein belongs to the sulfur carrier protein TusA family.

It is found in the cytoplasm. Its function is as follows. Sulfur carrier protein which probably makes part of a sulfur-relay system. The polypeptide is Sulfur carrier protein TusA (Haemophilus influenzae (strain PittEE)).